The primary structure comprises 496 residues: UDP-N-acetylmuramoyl-L-alanyl-D-glutamate--2,6-diaminopimelate ligase (496 aa).

Residues Leu-29 and Ser-31 each coordinate UDP-N-acetyl-alpha-D-muramoyl-L-alanyl-D-glutamate. Position 118 to 124 (118 to 124 (GTNGKTT)) interacts with ATP. UDP-N-acetyl-alpha-D-muramoyl-L-alanyl-D-glutamate contacts are provided by residues Asn-159, 160–161 (TT), Ser-187, Gln-193, and Arg-195. At Lys-227 the chain carries N6-carboxylysine. Residues Arg-392, 416 to 419 (DNPR), Gly-467, and Glu-471 contribute to the meso-2,6-diaminopimelate site. The short motif at 416-419 (DNPR) is the Meso-diaminopimelate recognition motif element.

The protein belongs to the MurCDEF family. MurE subfamily. Mg(2+) is required as a cofactor. Post-translationally, carboxylation is probably crucial for Mg(2+) binding and, consequently, for the gamma-phosphate positioning of ATP.

It localises to the cytoplasm. The catalysed reaction is UDP-N-acetyl-alpha-D-muramoyl-L-alanyl-D-glutamate + meso-2,6-diaminopimelate + ATP = UDP-N-acetyl-alpha-D-muramoyl-L-alanyl-gamma-D-glutamyl-meso-2,6-diaminopimelate + ADP + phosphate + H(+). The protein operates within cell wall biogenesis; peptidoglycan biosynthesis. In terms of biological role, catalyzes the addition of meso-diaminopimelic acid to the nucleotide precursor UDP-N-acetylmuramoyl-L-alanyl-D-glutamate (UMAG) in the biosynthesis of bacterial cell-wall peptidoglycan. This is UDP-N-acetylmuramoyl-L-alanyl-D-glutamate--2,6-diaminopimelate ligase from Wigglesworthia glossinidia brevipalpis.